Reading from the N-terminus, the 176-residue chain is ATP synthase subunit delta (176 aa).

The protein belongs to the ATPase delta chain family. In terms of assembly, F-type ATPases have 2 components, F(1) - the catalytic core - and F(0) - the membrane proton channel. F(1) has five subunits: alpha(3), beta(3), gamma(1), delta(1), epsilon(1). F(0) has three main subunits: a(1), b(2) and c(10-14). The alpha and beta chains form an alternating ring which encloses part of the gamma chain. F(1) is attached to F(0) by a central stalk formed by the gamma and epsilon chains, while a peripheral stalk is formed by the delta and b chains.

Its subcellular location is the cell membrane. Functionally, f(1)F(0) ATP synthase produces ATP from ADP in the presence of a proton or sodium gradient. F-type ATPases consist of two structural domains, F(1) containing the extramembraneous catalytic core and F(0) containing the membrane proton channel, linked together by a central stalk and a peripheral stalk. During catalysis, ATP synthesis in the catalytic domain of F(1) is coupled via a rotary mechanism of the central stalk subunits to proton translocation. Its function is as follows. This protein is part of the stalk that links CF(0) to CF(1). It either transmits conformational changes from CF(0) to CF(1) or is implicated in proton conduction. The chain is ATP synthase subunit delta from Hamiltonella defensa subsp. Acyrthosiphon pisum (strain 5AT).